The following is a 130-amino-acid chain: uncharacterized protein (130 aa).

Disordered stretches follow at residues 1–47 (MTFY…QSNT) and 78–130 (QTLE…SESS). Residues 13–33 (QWKQLQTQQNKKNSPRPVTSS) show a composition bias toward polar residues. Basic residues predominate over residues 86-110 (PSKHKRKRTKYRRTKKSKHHSRKKT). A compositionally biased stretch (basic and acidic residues) spans 117–130 (SERDSTTGRESESS).

This is an uncharacterized protein from Torque teno mini virus 1 (isolate TLMV-CBD279).